The primary structure comprises 1040 residues: Putative protein tag-76 (1040 aa).

A compositionally biased stretch (polar residues) spans 1-15; sequence MSRRNATSFVDNNTL. Disordered stretches follow at residues 1-61 and 322-367; these read MSRR…GSVS and RTSK…PGAN. The segment covering 16–32 has biased composition (low complexity); that stretch reads TSSGISGSGSMSPPITS. Positions 33–50 are enriched in polar residues; the sequence is RPASGQASPLTSNGSLSP. Gly residues predominate over residues 333–356; it reads GPGGPGGPGGYRGGRGGGRGGSYG. The 108-residue stretch at 379–486 folds into the PAZ domain; sequence FTMDTLSRDT…LPMEHCLIDS (108 aa). One can recognise a Piwi domain in the interval 660-966; the sequence is CIIVVLQSKN…VATRARCHVK (307 aa).

This chain is Putative protein tag-76 (tag-76), found in Caenorhabditis elegans.